Reading from the N-terminus, the 38-residue chain is MTRPNPNDQNVELNRTSLYWGLLLIFVLAVPFSNYFFN.

A helical membrane pass occupies residues 17-37; that stretch reads SLYWGLLLIFVLAVPFSNYFF.

This sequence belongs to the PsbL family. PSII is composed of 1 copy each of membrane proteins PsbA, PsbB, PsbC, PsbD, PsbE, PsbF, PsbH, PsbI, PsbJ, PsbK, PsbL, PsbM, PsbT, PsbX, PsbY, PsbZ, Psb30/Ycf12, at least 3 peripheral proteins of the oxygen-evolving complex and a large number of cofactors. It forms dimeric complexes.

The protein localises to the plastid. It localises to the chloroplast thylakoid membrane. Functionally, one of the components of the core complex of photosystem II (PSII). PSII is a light-driven water:plastoquinone oxidoreductase that uses light energy to abstract electrons from H(2)O, generating O(2) and a proton gradient subsequently used for ATP formation. It consists of a core antenna complex that captures photons, and an electron transfer chain that converts photonic excitation into a charge separation. This subunit is found at the monomer-monomer interface and is required for correct PSII assembly and/or dimerization. In Pinus thunbergii (Japanese black pine), this protein is Photosystem II reaction center protein L.